The following is a 545-amino-acid chain: Propane 2-monooxygenase, hydroxylase component large subunit (545 aa).

6 residues coordinate Fe cation: glutamate 97, glutamate 127, histidine 130, glutamate 192, glutamate 226, and histidine 229.

It belongs to the TmoA/XamoA family. The propane 2-monooxygenase multicomponent enzyme system is composed of an electron transfer component and a monooxygenase component interacting with the effector protein PrmD. The electron transfer component is composed of a reductase (PrmB), and the monooxygenase component is formed by a large subunit (PrmA) and a small subunit (PrmC). Probably requires the presence of the chaperonin-like protein PrmG to ensure a productive folding, resulting of a soluble PrmA, which leads to the active form of PrmABCD. It depends on Fe(2+) as a cofactor.

The enzyme catalyses propane + NADH + O2 + H(+) = propan-2-ol + NAD(+) + H2O. The catalysed reaction is phenol + NADH + O2 + H(+) = hydroquinone + NAD(+) + H2O. Its function is as follows. Component of the propane 2-monooxygenase multicomponent enzyme system which is involved in the degradation of propane via the O2-dependent hydroxylation of propane. Under acetone induction, also able to catalyze the oxidation of phenol to yield hydroquinone. The chain is Propane 2-monooxygenase, hydroxylase component large subunit from Gordonia sp. (strain TY-5).